A 247-amino-acid chain; its full sequence is Leucyl/phenylalanyl-tRNA--protein transferase (247 aa).

It belongs to the L/F-transferase family.

It localises to the cytoplasm. It carries out the reaction N-terminal L-lysyl-[protein] + L-leucyl-tRNA(Leu) = N-terminal L-leucyl-L-lysyl-[protein] + tRNA(Leu) + H(+). The enzyme catalyses N-terminal L-arginyl-[protein] + L-leucyl-tRNA(Leu) = N-terminal L-leucyl-L-arginyl-[protein] + tRNA(Leu) + H(+). It catalyses the reaction L-phenylalanyl-tRNA(Phe) + an N-terminal L-alpha-aminoacyl-[protein] = an N-terminal L-phenylalanyl-L-alpha-aminoacyl-[protein] + tRNA(Phe). Functionally, functions in the N-end rule pathway of protein degradation where it conjugates Leu, Phe and, less efficiently, Met from aminoacyl-tRNAs to the N-termini of proteins containing an N-terminal arginine or lysine. The polypeptide is Leucyl/phenylalanyl-tRNA--protein transferase (Solidesulfovibrio magneticus (strain ATCC 700980 / DSM 13731 / RS-1) (Desulfovibrio magneticus)).